Reading from the N-terminus, the 258-residue chain is UPF0328 protein ECU07_0060 (258 aa).

Belongs to the UPF0328 family.

The chain is UPF0328 protein ECU07_0060 from Encephalitozoon cuniculi (strain GB-M1) (Microsporidian parasite).